A 1013-amino-acid chain; its full sequence is Trehalose monomycolate exporter MmpL3 (1013 aa).

The Cytoplasmic segment spans residues 1–14 (MFAWWGRTVYQFRY). Residues 15 to 35 (IVIGVMVALCLGGGVYGISLG) traverse the membrane as a helical segment. Over 36-196 (NHVTQSGFYD…KRAEVAAIPL (161 aa)) the chain is Periplasmic. 40–44 (QSGFY) is a binding site for a 1,2-diacylglycero-3-phosphoethanolamine. 2 helical membrane passes run 197-217 (VAVV…PAII) and 218-238 (GGLA…FTPV). The Periplasmic portion of the chain corresponds to 239–240 (HF). Residues 241–261 (FAQPVVTLIGLGIAIDYGLFI) form a helical membrane-spanning segment. Residues 262-290 (VSRFREEIAEGYDTEAAVRRTVMTSGRTV) lie on the Cytoplasmic side of the membrane. A helical membrane pass occupies residues 291-311 (VFSAVIIVASSVPLLLFPQGF). Residues 312-317 (LKSITY) lie on the Periplasmic side of the membrane. The helical transmembrane segment at 318-338 (AIIASVMLAAILSITVLAAAL) threads the bilayer. At 339–401 (AILGPRVDAL…RLVNVVMKRP (63 aa)) the chain is on the cytoplasmic side. The chain crosses the membrane as a helical span at residues 402-422 (IAFAAPILVVMVLLIIPLGQL). At 423 to 567 (SLGGISEKYL…HSLFDKLPLM (145 aa)) the chain is on the periplasmic side. Residues 485–513 (SGFTDPDNDPEKMWKERPANDSGSKDPSV) form a disordered region. Basic and acidic residues predominate over residues 493–512 (DPEKMWKERPANDSGSKDPS). Residues 568 to 588 (ALILIVTTTVLMFLAFGSVVL) traverse the membrane as a helical segment. At 589-591 (PIK) the chain is on the cytoplasmic side. Residues 592 to 612 (AALMSALTLGSTMGILTWMFV) form a helical membrane-spanning segment. Topologically, residues 613 to 630 (DGHGSGLMNYTPQPLMAP) are periplasmic. Residues 631-651 (MIGLIIAVIWGLSTDYEVFLV) traverse the membrane as a helical segment. Residue Asp645 coordinates SQ109. At 652-678 (SRMVEARERGMSTAEAIRIGTATTGRL) the chain is on the cytoplasmic side. Residues 679-699 (ITGAALILAVVAGAFVFSDLV) traverse the membrane as a helical segment. Over 700–703 (MMKY) the chain is Periplasmic. Residues 704 to 724 (LAFGLLIALLLDATIIRMFLV) form a helical membrane-spanning segment. The Cytoplasmic segment spans residues 725 to 1013 (PAVMKLLGDD…QDLLRREGRL (289 aa)). Positions 754–1013 (TELPDERKRP…QDLLRREGRL (260 aa)) are disordered. Residues 757 to 772 (PDERKRPTVRESETDQ) show a composition bias toward basic and acidic residues. Composition is skewed to pro residues over residues 792-803 (HPAPEPVRPMPP) and 820-829 (PPQPPQPPQA). Positions 842 to 867 (RFAMARNAVRNAVNSAVHGGAGSAAA) are enriched in low complexity. A compositionally biased stretch (pro residues) spans 875-885 (PGGPAQPPAPP). Positions 973-996 (REQEPSTEKLNTREDAPEDPETKR) are enriched in basic and acidic residues.

The protein belongs to the resistance-nodulation-cell division (RND) (TC 2.A.6) family. MmpL subfamily. Monomer. Interacts with TtfA (via N-terminus); active trehalose monomycolate (TMM) biosynthesis is not required for the complex formation. Interacts with MSMEG_5308.

It is found in the cell inner membrane. The protein localises to the cell septum. The protein resides in the cell tip. Inhibited by the antimycobacterial compound BM212, a pyrrole derivative. Inhibited by the antitubercular drug SQ109. Inhibited by the adamantyl urea derivative AU1235, the indole carboxamide ICA38 and rimonabant, the antagonist for the cannabinoid receptor CB1. The dissociation constant (Kd) values for SQ109, AU1235, ICA38 and rimonabant are 1.65 uM, 0.29, 0.16 and 29.5, respectively. Inhibitory effects are due to binding of the inhibitors at the proton-transportation channel most likely dissipating the transmembrane electrochemical proton gradient needed for substrate translocation. In terms of biological role, transports trehalose monomycolate (TMM) to the cell wall. Flips TMM across the inner membrane. Membrane potential is not required for this function. Transports probably phosphatidylethanolamine (PE) as well. Binds specifically both TMM and PE, but not trehalose dimycolate (TDM). Also binds diacylglycerol (DAG) and other phospholipids, including phosphatidylglycerol (PG), phosphatidylinositol (PI), and cardiolipin (CDL). Contributes to membrane potential, cell wall composition, antibiotic susceptibility and fitness. This is Trehalose monomycolate exporter MmpL3 from Mycolicibacterium smegmatis (strain ATCC 700084 / mc(2)155) (Mycobacterium smegmatis).